The primary structure comprises 377 residues: Geranylgeranyl transferase type-1 subunit beta (377 aa).

PFTB repeat units lie at residues 144-186 (KEAC…YMLN), 193-234 (MKKA…CLMG), 245-284 (LNRI…KLLK), and 291-333 (FEKN…SLME). Residues 219-221 (HGG) and 263-266 (RPNK) contribute to the geranylgeranyl diphosphate site. Residues Asp269 and Cys271 each coordinate Zn(2+). 272 to 275 (YSFW) contacts geranylgeranyl diphosphate. Residue His321 participates in Zn(2+) binding.

Belongs to the protein prenyltransferase subunit beta family. As to quaternary structure, heterodimer of FNTA and PGGT1B. PGGT1B mediates interaction with substrate peptides. The cofactor is Zn(2+). Mg(2+) is required as a cofactor.

It carries out the reaction geranylgeranyl diphosphate + L-cysteinyl-[protein] = S-geranylgeranyl-L-cysteinyl-[protein] + diphosphate. Catalyzes the transfer of a geranyl-geranyl moiety from geranyl-geranyl pyrophosphate to a cysteine at the fourth position from the C-terminus of proteins having the C-terminal sequence Cys-aliphatic-aliphatic-X. Known substrates include RAC1, RAC2, RAP1A and RAP1B. This chain is Geranylgeranyl transferase type-1 subunit beta (PGGT1B), found in Bos taurus (Bovine).